The primary structure comprises 279 residues: Thioredoxin-like 1-1, chloroplastic (279 aa).

In terms of domain architecture, Thioredoxin spans Ala56–Pro202. Catalysis depends on nucleophile residues Cys125 and Cys128. A disulfide bridge connects residues Cys125 and Cys128.

This sequence belongs to the thioredoxin family.

Its function is as follows. Probable thiol-disulfide oxidoreductase that may participate in various redox reactions. This is Thioredoxin-like 1-1, chloroplastic from Oryza sativa subsp. japonica (Rice).